We begin with the raw amino-acid sequence, 235 residues long: Lipoprotein-releasing system ATP-binding protein LolD (235 aa).

One can recognise an ABC transporter domain in the interval 5–235; that stretch reads LECRDIRKVY…LMTESASVEG (231 aa). ATP is bound at residue 41–48; it reads GSSGSGKS.

The protein belongs to the ABC transporter superfamily. Lipoprotein translocase (TC 3.A.1.125) family. As to quaternary structure, the complex is composed of two ATP-binding proteins (LolD) and two transmembrane proteins (LolC and LolE).

It is found in the cell inner membrane. In terms of biological role, part of the ABC transporter complex LolCDE involved in the translocation of mature outer membrane-directed lipoproteins, from the inner membrane to the periplasmic chaperone, LolA. Responsible for the formation of the LolA-lipoprotein complex in an ATP-dependent manner. In Vibrio parahaemolyticus serotype O3:K6 (strain RIMD 2210633), this protein is Lipoprotein-releasing system ATP-binding protein LolD.